The sequence spans 404 residues: Spore germination protein YndF (404 aa).

The N-terminal stretch at 1–24 (MKSKLKRQLPAMVIVCLLMICVTG) is a signal peptide. C25 carries N-palmitoyl cysteine lipidation. C25 carries the S-diacylglycerol cysteine lipid modification.

The protein belongs to the GerABKC lipoprotein family.

It localises to the cell membrane. May be involved in spore germination. The sequence is that of Spore germination protein YndF (yndF) from Bacillus subtilis (strain 168).